Here is a 958-residue protein sequence, read N- to C-terminus: Dermatan-sulfate epimerase (958 aa).

Residues 1-22 (MRTHTRGAPSVFFICLFCFVSA) form the signal peptide. Over 23–902 (CVTDENPEVM…APALSASYTR (880 aa)) the chain is Lumenal. N-linked (GlcNAc...) asparagine glycosylation is present at asparagine 183. Residue histidine 205 is the Proton donor of the active site. Tyrosine 261 is a catalytic residue. N-linked (GlcNAc...) asparagine glycans are attached at residues asparagine 336 and asparagine 411. Residues histidine 452 and glutamate 470 each contribute to the Mn(2+) site. Tyrosine 473 is a catalytic residue. Asparagine 481 is a Mn(2+) binding site. Asparagine 642 and asparagine 648 each carry an N-linked (GlcNAc...) asparagine glycan. The helical transmembrane segment at 903-923 (LFLILNIAIFFVMLAMQLTYF) threads the bilayer. Over 924–933 (QRAQSLHGQR) the chain is Cytoplasmic. A helical membrane pass occupies residues 934 to 954 (CLYAVLLIDSCILLWLYSSCS). Residues 955–958 (QSQC) are Lumenal-facing.

This sequence belongs to the dermatan-sulfate isomerase family. It depends on Mn(2+) as a cofactor. In terms of processing, N-glycosylated. Glycosylation is important for enzymatic activity.

It localises to the endoplasmic reticulum membrane. The protein localises to the golgi apparatus membrane. It is found in the cytoplasmic vesicle membrane. The protein resides in the microsome membrane. It carries out the reaction chondroitin 4'-sulfate = dermatan 4'-sulfate. The protein operates within glycan metabolism; chondroitin sulfate biosynthesis. It participates in glycan metabolism; heparan sulfate biosynthesis. Its function is as follows. Converts D-glucuronic acid to L-iduronic acid (IdoUA) residues. Plays an important role in the biosynthesis of the glycosaminoglycan/mucopolysaccharide dermatan sulfate. This Bos taurus (Bovine) protein is Dermatan-sulfate epimerase (DSE).